A 276-amino-acid chain; its full sequence is Exosome complex component RRP43 (276 aa).

Residue A2 is modified to N-acetylalanine.

Belongs to the RNase PH family. As to quaternary structure, component of the RNA exosome core complex (Exo-9), composed of EXOSC1, EXOSC2, EXOSC3, EXOSC4, EXOSC5, EXOSC6, EXOSC7, EXOSC8 and EXOSC9; within the complex interacts with EXOSC5 and EXOSC6. The catalytically inactive RNA exosome core complex (Exo-9) associates with the catalytic subunit EXOSC10/RRP6. Exo-9 may associate with DIS3 to form the nucleolar exosome complex, or DIS3L to form the cytoplasmic exosome complex. Exo-9 is formed by a hexameric base ring consisting of the heterodimers EXOSC4-EXOSC9, EXOSC5-EXOSC8 and EXOSC6-EXOSC7, and a cap ring consisting of EXOSC1, EXOSC2 and EXOSC3. The RNA exosome complex associates with cofactors C1D/RRP47, MPHOSPH6/MPP6 and MTREX/MTR4. Binds outer membrane protein opap from Neisseria gonorrhoeae.

It is found in the cytoplasm. The protein localises to the nucleus. It localises to the nucleolus. Non-catalytic component of the RNA exosome complex which has 3'-&gt;5' exoribonuclease activity and participates in a multitude of cellular RNA processing and degradation events. In the nucleus, the RNA exosome complex is involved in proper maturation of stable RNA species such as rRNA, snRNA and snoRNA, in the elimination of RNA processing by-products and non-coding 'pervasive' transcripts, such as antisense RNA species and promoter-upstream transcripts (PROMPTs), and of mRNAs with processing defects, thereby limiting or excluding their export to the cytoplasm. The RNA exosome may be involved in Ig class switch recombination (CSR) and/or Ig variable region somatic hypermutation (SHM) by targeting AICDA deamination activity to transcribed dsDNA substrates. In the cytoplasm, the RNA exosome complex is involved in general mRNA turnover and specifically degrades inherently unstable mRNAs containing AU-rich elements (AREs) within their 3' untranslated regions, and in RNA surveillance pathways, preventing translation of aberrant mRNAs. It seems to be involved in degradation of histone mRNA. The catalytic inactive RNA exosome core complex of 9 subunits (Exo-9) is proposed to play a pivotal role in the binding and presentation of RNA for ribonucleolysis, and to serve as a scaffold for the association with catalytic subunits and accessory proteins or complexes. EXOSC8 binds to ARE-containing RNAs. This Homo sapiens (Human) protein is Exosome complex component RRP43 (EXOSC8).